Here is a 284-residue protein sequence, read N- to C-terminus: Tropomyosin Per a 7.0103 (284 aa).

The stretch at 1–266 (MDAIKKKMQA…EDELVHEKEK (266 aa)) forms a coiled coil.

The protein belongs to the tropomyosin family. Homodimer.

Its function is as follows. Tropomyosin, in association with the troponin complex, plays a central role in the calcium dependent regulation of muscle contraction. In Periplaneta americana (American cockroach), this protein is Tropomyosin Per a 7.0103.